A 514-amino-acid chain; its full sequence is M-phase inducer phosphatase 1 (514 aa).

Positions 73 to 83 (MGSSESTDSGF) match the Phosphodegron motif. At S75 the chain carries Phosphoserine; by CHEK1. Phosphoserine; by NEK11 is present on residues S78, S81, and S87. S106 carries the post-translational modification Phosphoserine. Phosphoserine; by CHEK1 and CHEK2 is present on S123. Residues 140–142 (KEN) carry the KEN box motif. Position 172 is a phosphoserine; by CHEK1 (S172). Residues 256 to 308 (PCGSSTRAVLKRADRSHEEPPRGTKRRKSVPSPVKAKADVPEPAQLPSQSLSL) form a disordered region. A compositionally biased stretch (basic and acidic residues) spans 266-277 (KRADRSHEEPPR). 2 positions are modified to phosphoserine; by CHEK1 and CHEK2: S271 and S284. Position 311 is a phosphoserine (S311). The region spanning 366 to 472 (LIKEFVIIDC…FFLKCQSHCE (107 aa)) is the Rhodanese domain. C421 is an active-site residue. Position 497 is a phosphothreonine; by CHEK1 (T497). S503 and S509 each carry phosphoserine; by PLK3.

It belongs to the MPI phosphatase family. In terms of assembly, interacts with CCNB1/cyclin B1. Interacts with YWHAE/14-3-3 epsilon when phosphorylated. Interacts with CUL1 specifically when CUL1 is neddylated and active. Interacts with BTRC/BTRCP1 and FBXW11/BTRCP2. Interactions with CUL1, BTRC and FBXW11 are enhanced upon DNA damage. Interacts with CHEK2; mediates CDC25A phosphorylation and degradation in response to infrared-induced DNA damages. Interacts with HSP90AB1; prevents heat shock-mediated CDC25A degradation and contributes to cell cycle progression. In terms of processing, phosphorylated by CHEK1 on Ser-75, Ser-123, Ser-172, Ser-271, Ser-284 and Thr-497 during checkpoint mediated cell cycle arrest. Also phosphorylated by CHEK2 on Ser-123, Ser-271, and Ser-284 during checkpoint mediated cell cycle arrest. Phosphorylation on Ser-172 and Thr-497 creates binding sites for YWHAE/14-3-3 epsilon which inhibits CDC25A. Phosphorylation on Ser-75, Ser-123, Ser-172, Ser-271 and Ser-284 may also promote ubiquitin-dependent proteolysis of CDC25A by the SCF complex. Phosphorylation of CDC25A at Ser-75 by CHEK1 primes it for subsequent phosphorylation at Ser-75, Ser-81 and Ser-87 by NEK11. Phosphorylation by NEK11 is required for BTRC-mediated polyubiquitination and degradation. Phosphorylation by PIM1 leads to an increase in phosphatase activity. Phosphorylated by PLK3 following DNA damage, leading to promote its ubiquitination and degradation. Ubiquitinated by the anaphase promoting complex/cyclosome (APC/C) ubiquitin ligase complex that contains FZR1/CDH1 during G1 phase leading to its degradation by the proteasome. Ubiquitinated by a SCF complex containing BTRC and FBXW11 during S phase leading to its degradation by the proteasome. Deubiquitination by USP17L2/DUB3 leads to its stabilization. Ubiquitously expressed in most developing tissue. High levels in the testis and lower levels in the ovary, particularly in germ cells. Lower levels also in kidney, liver, heart and muscle.

It catalyses the reaction O-phospho-L-tyrosyl-[protein] + H2O = L-tyrosyl-[protein] + phosphate. Its activity is regulated as follows. Stimulated by B-type cyclins. Stimulated by PIM1-mediated phosphorylation. Its function is as follows. Tyrosine protein phosphatase which functions as a dosage-dependent inducer of mitotic progression. Directly dephosphorylates CDK1 and stimulates its kinase activity. Also dephosphorylates CDK2 in complex with cyclin-E, in vitro. The protein is M-phase inducer phosphatase 1 (Cdc25a) of Mus musculus (Mouse).